The chain runs to 345 residues: tRNA N6-adenosine threonylcarbamoyltransferase (345 aa).

Fe cation contacts are provided by H109 and H113. Substrate-binding positions include 136 to 140 (TVSGG), D169, G182, D186, and N284. Residue D312 coordinates Fe cation.

Belongs to the KAE1 / TsaD family. Fe(2+) serves as cofactor.

It is found in the cytoplasm. The catalysed reaction is L-threonylcarbamoyladenylate + adenosine(37) in tRNA = N(6)-L-threonylcarbamoyladenosine(37) in tRNA + AMP + H(+). In terms of biological role, required for the formation of a threonylcarbamoyl group on adenosine at position 37 (t(6)A37) in tRNAs that read codons beginning with adenine. Is involved in the transfer of the threonylcarbamoyl moiety of threonylcarbamoyl-AMP (TC-AMP) to the N6 group of A37, together with TsaE and TsaB. TsaD likely plays a direct catalytic role in this reaction. This Prosthecochloris aestuarii (strain DSM 271 / SK 413) protein is tRNA N6-adenosine threonylcarbamoyltransferase.